Consider the following 240-residue polypeptide: Ribonuclease 3 (240 aa).

In terms of domain architecture, RNase III spans 9–141 (VEEFQKKTGI…LLAAIYLDQG (133 aa)). Mg(2+) is bound at residue Glu54. Asp58 is an active-site residue. Asp127 and Glu130 together coordinate Mg(2+). Glu130 is an active-site residue. The DRBM domain occupies 168–237 (DYKTALQEIV…ARIAYEKLLK (70 aa)).

This sequence belongs to the ribonuclease III family. As to quaternary structure, homodimer. Requires Mg(2+) as cofactor.

Its subcellular location is the cytoplasm. The catalysed reaction is Endonucleolytic cleavage to 5'-phosphomonoester.. Its function is as follows. Digests double-stranded RNA. Involved in the processing of primary rRNA transcript to yield the immediate precursors to the large and small rRNAs (23S and 16S). Processes some mRNAs, and tRNAs when they are encoded in the rRNA operon. Processes pre-crRNA and tracrRNA of type II CRISPR loci if present in the organism. This Thermotoga petrophila (strain ATCC BAA-488 / DSM 13995 / JCM 10881 / RKU-1) protein is Ribonuclease 3.